A 310-amino-acid chain; its full sequence is Cytosolic Fe-S cluster assembly factor Nubp1 homolog (310 aa).

4 residues coordinate [4Fe-4S] cluster: Cys8, Cys22, Cys25, and Cys31. 62-69 (GKGGVGKS) contributes to the ATP binding site. Residues Cys239 and Cys242 each coordinate [4Fe-4S] cluster.

The protein belongs to the Mrp/NBP35 ATP-binding proteins family. NUBP1/NBP35 subfamily. In terms of assembly, heterotetramer of 2 Nubp1 and 2 Nubp2 chains. Requires [4Fe-4S] cluster as cofactor.

Its subcellular location is the cytoplasm. Component of the cytosolic iron-sulfur (Fe/S) protein assembly (CIA) machinery. Required for maturation of extramitochondrial Fe-S proteins. The Nubp1-Nubp2 heterotetramer forms a Fe-S scaffold complex, mediating the de novo assembly of an Fe-S cluster and its transfer to target apoproteins. This is Cytosolic Fe-S cluster assembly factor Nubp1 homolog from Drosophila ananassae (Fruit fly).